The chain runs to 1858 residues: MAKDENPSYLHLIFLSSRIRVFILDPPLSLPLSHGQCELQVVEEAAMDPSGLNLQGNPAENQESWTSGVSVGRGTPNLGVGTAVAGRSCPSSTLFPGSSLSSTALLNTMHEGSFPQTALVAGSVSSADEQHGAPPVRPSYNLPAGCTQVPISILVFHRRLTGRGSRCRSPQSRSFMPAPALSGVSEADGAYGPIPQSDFLSLRGPSEVFPGDMAMNHSEPATSYGYNSEYAPMHLQPNGLYTEASNTESEREASQLQQSAEAVICDSLSKLESAMEKIQGQNPQESSGLVAEGSADDNIHKYHQKAKRARTQITHSDKIDLPTQAVSACKEKTITQIEMQIADAERTEALKGEDAPAQKLKTRRRKHRPKVIREDRPAKKQMATTSEEKPLNQKPKRKYVRKNRNPSSLEKCAEPFSDHSISRESRTTVRSSIASVRRRLQFEFGEHGVQRDQSSMTNSWYQNQEKPVNAESSLCSVTKSSVQVEHGQELHMENSPEGLFFGINSKLNKILDEYIHLPEAAPKPSEQIPLAASGHVSEELARKQYDVRHTHDPDSTSYNIERSGLITTKGHKKDLDLNYSNTNGFQMYCSASLLPEMDSTKGSMTKVSKMDKNKKRHYGGESSLAGTQSSIIMRTAAEMLAVYQACGIKKKRSARVRRNSFLSVMDLEKNTSQESTRLPRSCMEALYESSYIKFMTKKRSQKARLNSPNSIQPNIDQKNRFSSETVFSGGFNGLKRSEETFQKTLPQIPDDKRINLDIHCKVPVESSPNTSTPPYMDYLQGVTSKFRYFDLNTEQVHKTEMHLSQTMPSLSSLGATNYLPNALVPYVGGAVVPYQTQFHLVKKQRPRAKVDLDFETTRVWNLLMGKAADPVDGTDVDKERWWKQEREVFQGRANSFIARMRLVQGDRRFSPWKGSVVDSVVGVFLTQNVADHLSSSAYMALAASFPTGSHGNCNDGIAGQDNEEIISTSAVGDRGTFEFFYNGSRPDIGLNFEFSMACEKIHMEPKDNTTVNELTKGENYSLHCKESAGSLCDHETEIDHKAKSISDFSAVELTACMKNLHATQFQKEISLSQSVVTSESILQPGLPLSSGMDHARRNFVGSISDTASQQVGSNFDDGKSLTGNDVTANETEYHGIKAAATNNYVVDEPGIPSGSSLYPFFSAIDCHQLDGRNDTHVSSTSPNCSICSASSNFKIGTIEENSSLFMPFDAHLAQRNGNMIVDTNLSSALESTELPVKLLHCGKRSCYEASEFQDHESLYATGGVIPETATKADDSTLKSGFASFNGLPDTAAQASKPKKSRTTSKKNSENFDWDKLRRQACGNYQMKERIFDRRDSVDWEAVRCADVQRISHAIRERGMNNVLAERIQKFLNRLVTDHGSIDLEWLRDVPPDSAKDYLLSIRGLGLKSVECVRLLTLHHLAFPVDTNVGRICVRLGWVPIQPLPESLQLHLLELYPVLETIQKYLWPRLCKLDQQTLYELHYQMITFGKVFCTKSKPNCNACPMRSECRHFASAFASARLALPSPQDKRLVNLSNQFAFHNGTMPTPNSTPLPQLEGSIHARDVHANNTNPIIEEPASPREEECRELLENDIEDFDEDTDEIPIIKLNMEAFSQNLENCIKESNKDFQSDDITKALVAISNEAASIPVPKLKNVHRLRTEHYVYELPDSHPLMQQLALDQREPDDPSPYLLAIWTPDELKDTREAPKPCCNPQTEGGLCSNEMCHNCVSERENQYRYVRGTVLVPCRTAMRGSFPLNGTYFQVNEVFADHSSSHNPINIPREQLWNLHRRMVYFGTSVPTIFKGLTTEEIQHCFWRGFVCVRGFNMETRAPRPLCPHFHLAASKLRRSSKKAATEQTH.

Positions Thr-347–Pro-356 are enriched in basic and acidic residues. Disordered regions lie at residues Thr-347–Phe-416 and Pro-1288–Glu-1309. Basic residues-rich tracts occupy residues Leu-360–Lys-370 and Lys-394–Arg-404. 4 residues coordinate [4Fe-4S] cluster: Cys-1492, Cys-1499, Cys-1502, and Cys-1508.

It belongs to the DNA glycosylase family. DEMETER subfamily. It depends on [4Fe-4S] cluster as a cofactor. As to expression, expressed in pistils and immature seeds. Expressed a low levels in roots, leaves and anthers.

Its subcellular location is the nucleus. Functionally, bifunctional DNA glycosylase/lyase, which excises 5-methylcytosine (5-meC) and 5-hydroxymethylcytosine (5-hmeC), leaving an apyrimidinic (AP) site that is subsequently incised by the lyase activity. Is responsible for the demethylation of methylated cytosine residues of Tos17 retrotransposon DNA. Demethylation of Tos17 cytosine residues promotes its transposition. May be involved in seed development. The chain is Protein ROS1C from Oryza sativa subsp. japonica (Rice).